The chain runs to 187 residues: Glutathione-dependent formaldehyde-activating enzyme (187 aa).

Positions 20-167 constitute a CENP-V/GFA domain; it reads FAGGTLVCKC…LKELGLEPYD (148 aa). Cysteine 27, cysteine 29, cysteine 48, cysteine 50, cysteine 53, cysteine 95, and cysteine 98 together coordinate Zn(2+).

Belongs to the Gfa family. Requires Zn(2+) as cofactor.

The catalysed reaction is S-(hydroxymethyl)glutathione = glutathione + formaldehyde. It functions in the pathway one-carbon metabolism; formaldehyde degradation; formate from formaldehyde (glutathione route): step 1/3. In terms of biological role, catalyzes the condensation of formaldehyde and glutathione to S-hydroxymethylglutathione. This Bradyrhizobium sp. (strain BTAi1 / ATCC BAA-1182) protein is Glutathione-dependent formaldehyde-activating enzyme.